Consider the following 382-residue polypeptide: Lipid-A-disaccharide synthase (382 aa).

The protein belongs to the LpxB family.

The catalysed reaction is 2-N,3-O-bis[(3R)-3-hydroxytetradecanoyl]-alpha-D-glucosaminyl 1-phosphate + UDP-2-N,3-O-bis[(3R)-3-hydroxytetradecanoyl]-alpha-D-glucosamine = lipid A disaccharide (E. coli) + UDP + H(+). It carries out the reaction a lipid X + a UDP-2-N,3-O-bis[(3R)-3-hydroxyacyl]-alpha-D-glucosamine = a lipid A disaccharide + UDP + H(+). It functions in the pathway glycolipid biosynthesis; lipid IV(A) biosynthesis; lipid IV(A) from (3R)-3-hydroxytetradecanoyl-[acyl-carrier-protein] and UDP-N-acetyl-alpha-D-glucosamine: step 5/6. In terms of biological role, condensation of UDP-2,3-diacylglucosamine and 2,3-diacylglucosamine-1-phosphate to form lipid A disaccharide, a precursor of lipid A, a phosphorylated glycolipid that anchors the lipopolysaccharide to the outer membrane of the cell. This chain is Lipid-A-disaccharide synthase, found in Citrobacter koseri (strain ATCC BAA-895 / CDC 4225-83 / SGSC4696).